We begin with the raw amino-acid sequence, 327 residues long: Putative HTH-type transcriptional regulatory protein Mbar_A2318 (327 aa).

Residues 132–190 form the HTH cro/C1-type domain; the sequence is LKKARMGQSMSLGTLASMVGVSRRTISKYEEEGMDASIDVVLQLEDIFGVELAKPINIL. The H-T-H motif DNA-binding region spans 143-162; that stretch reads LGTLASMVGVSRRTISKYEE.

The chain is Putative HTH-type transcriptional regulatory protein Mbar_A2318 from Methanosarcina barkeri (strain Fusaro / DSM 804).